Reading from the N-terminus, the 410-residue chain is 3-phosphoshikimate 1-carboxyvinyltransferase (410 aa).

Lys27, Ser28, and Arg32 together coordinate 3-phosphoshikimate. Lys27 provides a ligand contact to phosphoenolpyruvate. The phosphoenolpyruvate site is built by Gly91 and Arg119. The 3-phosphoshikimate site is built by Ser161, Ser162, Gln163, Asp297, Gln319, and Lys323. Gln163 contacts phosphoenolpyruvate. The Proton acceptor role is filled by Asp297. Phosphoenolpyruvate contacts are provided by Arg327, Arg368, and Lys394.

It belongs to the EPSP synthase family. Monomer.

It is found in the cytoplasm. The enzyme catalyses 3-phosphoshikimate + phosphoenolpyruvate = 5-O-(1-carboxyvinyl)-3-phosphoshikimate + phosphate. Its pathway is metabolic intermediate biosynthesis; chorismate biosynthesis. Its function is as follows. Catalyzes the transfer of the enolpyruvyl moiety of phosphoenolpyruvate (PEP) to the 5-hydroxyl of shikimate-3-phosphate (S3P) to produce enolpyruvyl shikimate-3-phosphate and inorganic phosphate. The sequence is that of 3-phosphoshikimate 1-carboxyvinyltransferase from Pyrococcus abyssi (strain GE5 / Orsay).